We begin with the raw amino-acid sequence, 81 residues long: MTDLFSTPDHTLDAQGLRCPEPVMMVRKTVRTMQTGETLLIIADDPATTRDIPGFCTFMEHELIAQETEALPYRYLLRKGA.

Residue Cys-19 is the Cysteine persulfide intermediate of the active site.

The protein belongs to the sulfur carrier protein TusA family. As to quaternary structure, interacts with IscS.

It is found in the cytoplasm. The protein operates within tRNA modification. Sulfur carrier protein involved in sulfur trafficking in the cell. Part of a sulfur-relay system required for 2-thiolation during synthesis of 2-thiouridine of the modified wobble base 5-methylaminomethyl-2-thiouridine (mnm(5)s(2)U) in tRNA. Interacts with IscS and stimulates its cysteine desulfurase activity. Accepts an activated sulfur from IscS, which is then transferred to TusD, and thus determines the direction of sulfur flow from IscS to 2-thiouridine formation. Also appears to be involved in sulfur transfer for the biosynthesis of molybdopterin. This is Sulfur carrier protein TusA from Enterobacter sp. (strain 638).